A 204-amino-acid chain; its full sequence is MIGRLRGAVAEIGEEEALIDVMGVGYVVRCGSRTLQRLPALGEEALLHIESQWSESAGLRLYGFGTREDRRAFVLLQAIQGVGPKAAMAVLDVLSPAELASAVAREDKAAVGRASGVGPKLALRIVTELKDKPITDGPVLMTAPGAVAAAPAKAAPTGDAVAALMGLGVAEVNARRVVEAAAAKLGDEATVQALIKAGLQELGR.

Positions 1–65 (MIGRLRGAVA…SAGLRLYGFG (65 aa)) are domain I. The segment at 66–142 (TREDRRAFVL…PITDGPVLMT (77 aa)) is domain II. The tract at residues 143–152 (APGAVAAAPA) is flexible linker. The tract at residues 152–204 (AKAAPTGDAVAALMGLGVAEVNARRVVEAAAAKLGDEATVQALIKAGLQELGR) is domain III.

It belongs to the RuvA family. As to quaternary structure, homotetramer. Forms an RuvA(8)-RuvB(12)-Holliday junction (HJ) complex. HJ DNA is sandwiched between 2 RuvA tetramers; dsDNA enters through RuvA and exits via RuvB. An RuvB hexamer assembles on each DNA strand where it exits the tetramer. Each RuvB hexamer is contacted by two RuvA subunits (via domain III) on 2 adjacent RuvB subunits; this complex drives branch migration. In the full resolvosome a probable DNA-RuvA(4)-RuvB(12)-RuvC(2) complex forms which resolves the HJ.

It is found in the cytoplasm. The RuvA-RuvB-RuvC complex processes Holliday junction (HJ) DNA during genetic recombination and DNA repair, while the RuvA-RuvB complex plays an important role in the rescue of blocked DNA replication forks via replication fork reversal (RFR). RuvA specifically binds to HJ cruciform DNA, conferring on it an open structure. The RuvB hexamer acts as an ATP-dependent pump, pulling dsDNA into and through the RuvAB complex. HJ branch migration allows RuvC to scan DNA until it finds its consensus sequence, where it cleaves and resolves the cruciform DNA. This is Holliday junction branch migration complex subunit RuvA from Caulobacter sp. (strain K31).